The sequence spans 725 residues: Heme/hemopexin utilization protein C (725 aa).

An N-terminal signal peptide occupies residues 1–21 (MRFSKLSLAIATTLVTANALA). One can recognise a TBDR plug domain in the interval 36–147 (DPSRFAYTPE…LGGVVAMRTP (112 aa)). Residues 158–725 (KFGVKIRQGY…NAKISAVYSF (568 aa)) enclose the TBDR beta-barrel domain. Positions 708-725 (SLMEGTGRNAKISAVYSF) match the TonB C-terminal box motif.

This sequence belongs to the TonB-dependent receptor family.

It is found in the cell outer membrane. Its function is as follows. Required for utilization of free heme at low concentrations. The sequence is that of Heme/hemopexin utilization protein C (hxuC) from Haemophilus influenzae.